A 425-amino-acid polypeptide reads, in one-letter code: Synaptotagmin-4 (425 aa).

Residues 1–16 are Vesicular-facing; it reads MAPITTSREEFDEIPT. The helical transmembrane segment at 17–37 threads the bilayer; it reads VVGIFSAFGLVFTVSLFAWIC. The Cytoplasmic portion of the chain corresponds to 38–425; that stretch reads CQRKSSKSNK…IAKWHVLCDG (388 aa). The segment covering 73-83 has biased composition (basic and acidic residues); sequence FGADDKNEVKN. 2 disordered regions span residues 73-93 and 127-147; these read FGADDKNEVKNKPAVPKNSLH and LEGEKESVSPESLKSSTSLTS. Ser-135 carries the phosphoserine; by MAPK8 modification. Residues 135–146 show a composition bias toward low complexity; it reads SPESLKSSTSLT. C2 domains follow at residues 153–274 and 287–420; these read KLGT…MLMN and GRGE…AKWH. 3 residues coordinate Ca(2+): Asp-246, Ser-249, and Asp-252.

This sequence belongs to the synaptotagmin family. In terms of assembly, interacts with KIF1A; the interaction increases in presence of calcium and decreases when SYT4 is phosphorylated at Ser-135. The cofactor is Ca(2+). Phosphorylation at Ser-135 by MAPK8/JNK1 reduces interaction with KIF1A and neuronal dense core vesicles mobility. As to expression, expressed in melanocytes. Expressed in brain. Within brain, expression is highest in hippocampus, with substantial levels also detected in amygdala and thalamus.

The protein resides in the cytoplasmic vesicle. It localises to the secretory vesicle. The protein localises to the neuronal dense core vesicle membrane. In terms of biological role, synaptotagmin family member which does not bind Ca(2+). Involved in neuronal dense core vesicles (DCVs) mobility through its interaction with KIF1A. Upon increased neuronal activity, phosphorylation by MAPK8/JNK1 destabilizes the interaction with KIF1A and captures DCVs to synapses. Plays a role in dendrite formation by melanocytes. The protein is Synaptotagmin-4 (SYT4) of Homo sapiens (Human).